Reading from the N-terminus, the 565-residue chain is Protein NRT1/ PTR FAMILY 5.15 (565 aa).

2 helical membrane passes run 49–67 (FAYF…GPLG) and 80–100 (WSGT…AYLG). T104 carries the post-translational modification Phosphothreonine. 10 helical membrane-spanning segments follow: residues 110 to 130 (LIYI…IMGL), 142 to 162 (SIWV…GQGG), 189 to 209 (FFNW…IVVA), 217 to 237 (WAFG…IFLL), 331 to 351 (IPIW…ITFF), 368 to 388 (IPAA…VPLY), 409 to 429 (LQRI…AALV), 454 to 474 (IWWF…SMVG), 490 to 510 (IGLS…GFLI), and 534 to 554 (YFYW…LFIS).

Belongs to the major facilitator superfamily. Proton-dependent oligopeptide transporter (POT/PTR) (TC 2.A.17) family. As to expression, expressed in shoots, roots and leaves.

The protein resides in the membrane. The protein is Protein NRT1/ PTR FAMILY 5.15 (NPF5.15) of Arabidopsis thaliana (Mouse-ear cress).